Reading from the N-terminus, the 151-residue chain is Transcriptional repressor NrdR (151 aa).

A zinc finger spans residues 3–34 (CPYCAYGESKVVDSRSTEDGSSIRRRRECLKC). Residues 49-139 (ILVIKKNMSR…VYRQFKDINT (91 aa)) enclose the ATP-cone domain.

The protein belongs to the NrdR family. Zn(2+) serves as cofactor.

Its function is as follows. Negatively regulates transcription of bacterial ribonucleotide reductase nrd genes and operons by binding to NrdR-boxes. The chain is Transcriptional repressor NrdR from Clostridium botulinum (strain ATCC 19397 / Type A).